The sequence spans 303 residues: Methionyl-tRNA formyltransferase (303 aa).

(6S)-5,6,7,8-tetrahydrofolate is bound at residue 111-114 (SLLP).

It belongs to the Fmt family.

The enzyme catalyses L-methionyl-tRNA(fMet) + (6R)-10-formyltetrahydrofolate = N-formyl-L-methionyl-tRNA(fMet) + (6S)-5,6,7,8-tetrahydrofolate + H(+). Its function is as follows. Attaches a formyl group to the free amino group of methionyl-tRNA(fMet). The formyl group appears to play a dual role in the initiator identity of N-formylmethionyl-tRNA by promoting its recognition by IF2 and preventing the misappropriation of this tRNA by the elongation apparatus. The chain is Methionyl-tRNA formyltransferase from Ehrlichia chaffeensis (strain ATCC CRL-10679 / Arkansas).